A 417-amino-acid chain; its full sequence is S-inosyl-L-homocysteine hydrolase (417 aa).

Residues D124 and E149 each contribute to the substrate site. An NAD(+)-binding site is contributed by 150-152 (TTT). Positions 179 and 183 each coordinate substrate. NAD(+) contacts are provided by residues N184, 213 to 218 (GYGWCG), E236, N271, 292 to 294 (SGH), and N339.

Belongs to the adenosylhomocysteinase family. The cofactor is NAD(+).

It localises to the cytoplasm. It catalyses the reaction S-inosyl-L-homocysteine + H2O = L-homocysteine + inosine. It functions in the pathway amino-acid biosynthesis; S-adenosyl-L-methionine biosynthesis. In terms of biological role, catalyzes the hydrolysis of S-inosyl-L-homocysteine (SIH) to L-homocysteine (Hcy) and inosine. Likely functions in a S-adenosyl-L-methionine (SAM) recycling pathway from S-adenosyl-L-homocysteine (SAH) produced from SAM-dependent methylation reactions. Can also catalyze the reverse reaction in vitro, i.e. the synthesis of SIH from Hcy and inosine. The sequence is that of S-inosyl-L-homocysteine hydrolase from Methanothermobacter thermautotrophicus (strain ATCC 29096 / DSM 1053 / JCM 10044 / NBRC 100330 / Delta H) (Methanobacterium thermoautotrophicum).